We begin with the raw amino-acid sequence, 319 residues long: Small ribosomal subunit protein RACK1 (319 aa).

An N-acetylalanine modification is found at Ala-2. WD repeat units follow at residues Gly-15 to Gly-55, Gly-63 to Arg-102, Gly-105 to Leu-145, His-147 to Asp-191, Gly-194 to Thr-233, Ser-235 to Arg-275, and Ala-284 to Asn-319. Residues Lys-46 and Lys-53 each participate in a glycyl lysine isopeptide (Lys-Gly) (interchain with G-Cter in ubiquitin) cross-link. The residue at position 96 (Thr-96) is a Phosphothreonine. Residues Lys-107, Lys-137, and Lys-161 each participate in a glycyl lysine isopeptide (Lys-Gly) (interchain with G-Cter in ubiquitin) cross-link. Thr-168 carries the phosphothreonine modification.

Belongs to the WD repeat G protein beta family. Ribosomal protein RACK1 subfamily. As to quaternary structure, component of the small ribosomal subunit (SSU). Mature yeast ribosomes consist of a small (40S) and a large (60S) subunit. The 40S small subunit contains 1 molecule of ribosomal RNA (18S rRNA) and 33 different proteins (encoded by 57 genes). The large 60S subunit contains 3 rRNA molecules (25S, 5.8S and 5S rRNA) and 46 different proteins (encoded by 81 genes). RACK1 is located at the head of the SSU in the vicinity of the mRNA exit channel. RACK1 interacts with the mRNA-binding protein SCP16. RACK1 also exists simultaneously as a homodimer in a cytosolic non-ribosome-bound form.

The protein localises to the cytoplasm. In terms of biological role, component of the ribosome, a large ribonucleoprotein complex responsible for the synthesis of proteins in the cell. The small ribosomal subunit (SSU) binds messenger RNAs (mRNAs) and translates the encoded message by selecting cognate aminoacyl-transfer RNA (tRNA) molecules. The large subunit (LSU) contains the ribosomal catalytic site termed the peptidyl transferase center (PTC), which catalyzes the formation of peptide bonds, thereby polymerizing the amino acids delivered by tRNAs into a polypeptide chain. The nascent polypeptides leave the ribosome through a tunnel in the LSU and interact with protein factors that function in enzymatic processing, targeting, and the membrane insertion of nascent chains at the exit of the ribosomal tunnel. Located at the head of the 40S ribosomal subunit in the vicinity of the mRNA exit channel, RACK1 serves as a scaffold protein that can recruit other proteins to the ribosome. Involved in induction of the ribosome quality control (RQC) pathway; a pathway that degrades nascent peptide chains during problematic translation. Involved in the negative regulation of translation of a specific subset of proteins. In Saccharomyces cerevisiae (strain ATCC 204508 / S288c) (Baker's yeast), this protein is Small ribosomal subunit protein RACK1.